A 460-amino-acid polypeptide reads, in one-letter code: Methionine aminopeptidase 2-1 (460 aa).

The segment at 1 to 90 (MGSKSPNGED…SAQAAQQTAP (90 aa)) is disordered. Over residues 30-39 (SAAASGLLRG) the composition is skewed to low complexity. Residues 42-52 (EDQDEDGDDDE) are compositionally biased toward acidic residues. Over residues 69–81 (TKKRRRNNKKKKS) the composition is skewed to basic residues. Substrate is bound at residue His212. The a divalent metal cation site is built by Asp233, Asp244, and His313. A substrate-binding site is contributed by His321. Residues Glu346 and Glu441 each coordinate a divalent metal cation.

Belongs to the peptidase M24A family. Methionine aminopeptidase eukaryotic type 2 subfamily. Requires Co(2+) as cofactor. It depends on Zn(2+) as a cofactor. Mn(2+) is required as a cofactor. The cofactor is Fe(2+).

It is found in the cytoplasm. It catalyses the reaction Release of N-terminal amino acids, preferentially methionine, from peptides and arylamides.. Its function is as follows. Cotranslationally removes the N-terminal methionine from nascent proteins. The N-terminal methionine is often cleaved when the second residue in the primary sequence is small and uncharged (Met-Ala-, Cys, Gly, Pro, Ser, Thr, or Val). In Leptosphaeria maculans (strain JN3 / isolate v23.1.3 / race Av1-4-5-6-7-8) (Blackleg fungus), this protein is Methionine aminopeptidase 2-1.